A 461-amino-acid polypeptide reads, in one-letter code: L-seryl-tRNA(Sec) selenium transferase (461 aa).

N6-(pyridoxal phosphate)lysine is present on lysine 291.

It belongs to the SelA family. The cofactor is pyridoxal 5'-phosphate.

The protein resides in the cytoplasm. It carries out the reaction L-seryl-tRNA(Sec) + selenophosphate + H(+) = L-selenocysteinyl-tRNA(Sec) + phosphate. It functions in the pathway aminoacyl-tRNA biosynthesis; selenocysteinyl-tRNA(Sec) biosynthesis; selenocysteinyl-tRNA(Sec) from L-seryl-tRNA(Sec) (bacterial route): step 1/1. Its function is as follows. Converts seryl-tRNA(Sec) to selenocysteinyl-tRNA(Sec) required for selenoprotein biosynthesis. This Caldanaerobacter subterraneus subsp. tengcongensis (strain DSM 15242 / JCM 11007 / NBRC 100824 / MB4) (Thermoanaerobacter tengcongensis) protein is L-seryl-tRNA(Sec) selenium transferase.